The chain runs to 142 residues: Large ribosomal subunit protein uL11 (142 aa).

It belongs to the universal ribosomal protein uL11 family. In terms of assembly, part of the ribosomal stalk of the 50S ribosomal subunit. Interacts with L10 and the large rRNA to form the base of the stalk. L10 forms an elongated spine to which L12 dimers bind in a sequential fashion forming a multimeric L10(L12)X complex. Post-translationally, one or more lysine residues are methylated.

Forms part of the ribosomal stalk which helps the ribosome interact with GTP-bound translation factors. The sequence is that of Large ribosomal subunit protein uL11 from Stenotrophomonas maltophilia (strain R551-3).